A 694-amino-acid polypeptide reads, in one-letter code: Glycine--tRNA ligase beta subunit (694 aa).

The protein belongs to the class-II aminoacyl-tRNA synthetase family. Tetramer of two alpha and two beta subunits.

It localises to the cytoplasm. The enzyme catalyses tRNA(Gly) + glycine + ATP = glycyl-tRNA(Gly) + AMP + diphosphate. The polypeptide is Glycine--tRNA ligase beta subunit (Acidithiobacillus ferrooxidans (strain ATCC 23270 / DSM 14882 / CIP 104768 / NCIMB 8455) (Ferrobacillus ferrooxidans (strain ATCC 23270))).